Here is a 282-residue protein sequence, read N- to C-terminus: Phosphatidylserine decarboxylase proenzyme (282 aa).

Active-site charge relay system; for autoendoproteolytic cleavage activity residues include Asp-88, His-145, and Ser-248. Ser-248 functions as the Schiff-base intermediate with substrate; via pyruvic acid; for decarboxylase activity in the catalytic mechanism. At Ser-248 the chain carries Pyruvic acid (Ser); by autocatalysis.

It belongs to the phosphatidylserine decarboxylase family. PSD-B subfamily. Prokaryotic type I sub-subfamily. In terms of assembly, heterodimer of a large membrane-associated beta subunit and a small pyruvoyl-containing alpha subunit. Requires pyruvate as cofactor. In terms of processing, is synthesized initially as an inactive proenzyme. Formation of the active enzyme involves a self-maturation process in which the active site pyruvoyl group is generated from an internal serine residue via an autocatalytic post-translational modification. Two non-identical subunits are generated from the proenzyme in this reaction, and the pyruvate is formed at the N-terminus of the alpha chain, which is derived from the carboxyl end of the proenzyme. The autoendoproteolytic cleavage occurs by a canonical serine protease mechanism, in which the side chain hydroxyl group of the serine supplies its oxygen atom to form the C-terminus of the beta chain, while the remainder of the serine residue undergoes an oxidative deamination to produce ammonia and the pyruvoyl prosthetic group on the alpha chain. During this reaction, the Ser that is part of the protease active site of the proenzyme becomes the pyruvoyl prosthetic group, which constitutes an essential element of the active site of the mature decarboxylase.

Its subcellular location is the cell membrane. It carries out the reaction a 1,2-diacyl-sn-glycero-3-phospho-L-serine + H(+) = a 1,2-diacyl-sn-glycero-3-phosphoethanolamine + CO2. The protein operates within phospholipid metabolism; phosphatidylethanolamine biosynthesis; phosphatidylethanolamine from CDP-diacylglycerol: step 2/2. Functionally, catalyzes the formation of phosphatidylethanolamine (PtdEtn) from phosphatidylserine (PtdSer). The polypeptide is Phosphatidylserine decarboxylase proenzyme (Dechloromonas aromatica (strain RCB)).